We begin with the raw amino-acid sequence, 447 residues long: Argininosuccinate synthase (447 aa).

Residues 17 to 25 (AFSGGLDTS) and Ala-43 contribute to the ATP site. Tyr-99 is an L-citrulline binding site. Gly-129 and Thr-131 together coordinate ATP. L-aspartate-binding residues include Thr-131, Asn-135, and Asp-136. Residue Asn-135 participates in L-citrulline binding. Residue Asp-136 participates in ATP binding. Residues Arg-139 and Ser-192 each contribute to the L-citrulline site. Asp-194 is an ATP binding site. L-citrulline is bound by residues Thr-201, Glu-203, and Glu-280.

The protein belongs to the argininosuccinate synthase family. Type 2 subfamily. As to quaternary structure, homotetramer.

The protein localises to the cytoplasm. It carries out the reaction L-citrulline + L-aspartate + ATP = 2-(N(omega)-L-arginino)succinate + AMP + diphosphate + H(+). The protein operates within amino-acid biosynthesis; L-arginine biosynthesis; L-arginine from L-ornithine and carbamoyl phosphate: step 2/3. The chain is Argininosuccinate synthase (argG) from Escherichia coli O157:H7.